A 308-amino-acid chain; its full sequence is Aspartate carbamoyltransferase catalytic subunit (308 aa).

Carbamoyl phosphate is bound by residues R55 and T56. K83 contacts L-aspartate. R105, H133, and Q136 together coordinate carbamoyl phosphate. L-aspartate is bound by residues R166 and R220. 2 residues coordinate carbamoyl phosphate: G261 and P262.

This sequence belongs to the aspartate/ornithine carbamoyltransferase superfamily. ATCase family. Heterododecamer (2C3:3R2) of six catalytic PyrB chains organized as two trimers (C3), and six regulatory PyrI chains organized as three dimers (R2).

The enzyme catalyses carbamoyl phosphate + L-aspartate = N-carbamoyl-L-aspartate + phosphate + H(+). The protein operates within pyrimidine metabolism; UMP biosynthesis via de novo pathway; (S)-dihydroorotate from bicarbonate: step 2/3. Its function is as follows. Catalyzes the condensation of carbamoyl phosphate and aspartate to form carbamoyl aspartate and inorganic phosphate, the committed step in the de novo pyrimidine nucleotide biosynthesis pathway. This Chlorobium phaeobacteroides (strain DSM 266 / SMG 266 / 2430) protein is Aspartate carbamoyltransferase catalytic subunit.